An 860-amino-acid polypeptide reads, in one-letter code: Leucine--tRNA ligase (860 aa).

The 'HIGH' region motif lies at 42–52 (PYPSGRLHMGH). Positions 619-623 (KMSKS) match the 'KMSKS' region motif. ATP is bound at residue lysine 622.

This sequence belongs to the class-I aminoacyl-tRNA synthetase family.

The protein resides in the cytoplasm. It carries out the reaction tRNA(Leu) + L-leucine + ATP = L-leucyl-tRNA(Leu) + AMP + diphosphate. This Sodalis glossinidius (strain morsitans) protein is Leucine--tRNA ligase.